A 260-amino-acid polypeptide reads, in one-letter code: ATP synthase subunit a (260 aa).

5 helical membrane-spanning segments follow: residues 27 to 47 (FWTVNIDSMIFSVLLGALFIW), 90 to 110 (IAPLGLTVFVWIFLMNLMDLI), 132 to 154 (SADVNITMSMALGVFFLILYYSI), 208 to 228 (LIFILIAGLLPWWSQWILSVP), and 230 to 250 (AIFHILIITLQAFIFMVLTIV).

The protein belongs to the ATPase A chain family. In terms of assembly, F-type ATPases have 2 components, CF(1) - the catalytic core - and CF(0) - the membrane proton channel. CF(1) has five subunits: alpha(3), beta(3), gamma(1), delta(1), epsilon(1). CF(0) has three main subunits: a(1), b(2) and c(9-12). The alpha and beta chains form an alternating ring which encloses part of the gamma chain. CF(1) is attached to CF(0) by a central stalk formed by the gamma and epsilon chains, while a peripheral stalk is formed by the delta and b chains.

It localises to the cell inner membrane. Functionally, key component of the proton channel; it plays a direct role in the translocation of protons across the membrane. The protein is ATP synthase subunit a of Aeromonas hydrophila subsp. hydrophila (strain ATCC 7966 / DSM 30187 / BCRC 13018 / CCUG 14551 / JCM 1027 / KCTC 2358 / NCIMB 9240 / NCTC 8049).